Here is a 148-residue protein sequence, read N- to C-terminus: Large ribosomal subunit protein uL22 (148 aa).

Belongs to the universal ribosomal protein uL22 family. Part of the 50S ribosomal subunit.

Functionally, this protein binds specifically to 23S rRNA; its binding is stimulated by other ribosomal proteins, e.g. L4, L17, and L20. It is important during the early stages of 50S assembly. It makes multiple contacts with different domains of the 23S rRNA in the assembled 50S subunit and ribosome. The globular domain of the protein is located near the polypeptide exit tunnel on the outside of the subunit, while an extended beta-hairpin is found that lines the wall of the exit tunnel in the center of the 70S ribosome. This Thermosipho africanus (strain TCF52B) protein is Large ribosomal subunit protein uL22.